The chain runs to 272 residues: ATP synthase subunit a (272 aa).

A run of 6 helical transmembrane segments spans residues 41–61 (VLNIDSIIFSLVLGCFFLSIF), 110–130 (FVWVFLMNLMDLIPIDFFPFI), 143–165 (VPSADINITLSMSLGVFILILFY), 188–208 (VFFIFNFLLELVSLLSKPISL), 222–242 (IFILIAGLLPWWSQFFLNVPW), and 243–263 (AIFHILIISLQAFIFMVLTIV).

It belongs to the ATPase A chain family. In terms of assembly, F-type ATPases have 2 components, CF(1) - the catalytic core - and CF(0) - the membrane proton channel. CF(1) has five subunits: alpha(3), beta(3), gamma(1), delta(1), epsilon(1). CF(0) has three main subunits: a(1), b(2) and c(9-12). The alpha and beta chains form an alternating ring which encloses part of the gamma chain. CF(1) is attached to CF(0) by a central stalk formed by the gamma and epsilon chains, while a peripheral stalk is formed by the delta and b chains.

Its subcellular location is the cell membrane. In terms of biological role, key component of the proton channel; it plays a direct role in the translocation of protons across the membrane. The sequence is that of ATP synthase subunit a from Buchnera aphidicola subsp. Schizaphis graminum (strain Sg).